The chain runs to 468 residues: Sorting and assembly machinery component 50 homolog (468 aa).

Residues 1-24 (MGTVHARSLDPLPMNGPDFGSHDD) are disordered. The 81-residue stretch at 44 to 124 (VVVQRVHFEG…LDVTFEVTEL (81 aa)) folds into the POTRA domain.

The protein belongs to the SAM50/omp85 family. In terms of assembly, associates with the mitochondrial contact site and cristae organizing system (MICOS) complex (also known as MINOS or MitOS complex).

Its subcellular location is the mitochondrion outer membrane. May play a role in the maintenance of the structure of mitochondrial cristae. The polypeptide is Sorting and assembly machinery component 50 homolog (samm50) (Xenopus tropicalis (Western clawed frog)).